We begin with the raw amino-acid sequence, 270 residues long: MTRFALTVVRHGETRLNKEKIIQGQGIDEPLSETGFKQAAAAGIFLKDVKFTHVFSSDLTRTKQTVHGILEKSKFCKDMTVKYDSRLRERKYGVAEGRPLSELRAMAKAAGEECPAFTPPGGETLDQLKRRGKDFFEFLCQLILKEAGQNEQFSQEAPSSCLESSLAEIFPLGKNCASTFNSDSGTPGLAASVLVVSHGAYIRSLLDYFLTDLKCSFPATLSRSELTSVSPNTGMTVFILNFEKGGKGRPTAQCVCVNLQGHLAGVNKTP.

The active-site Tele-phosphohistidine intermediate is H11. An N6-acetyllysine modification is found at K50. The active-site Proton donor/acceptor is the E89.

The protein belongs to the phosphoglycerate mutase family. Interacts with HK2; the interaction increases hexokinase HK2 activity in a hypoxia- and HIF1A-dependent manner, resulting in the regulation of mitochondrial membrane potential, thus increasing NADPH production and decreasing intracellular ROS levels.

The protein resides in the cytoplasm. The protein localises to the nucleus. It is found in the mitochondrion. It catalyses the reaction beta-D-fructose 2,6-bisphosphate + H2O = beta-D-fructose 6-phosphate + phosphate. Functionally, fructose-bisphosphatase hydrolyzing fructose-2,6-bisphosphate as well as fructose-1,6-bisphosphate. Acts as a negative regulator of glycolysis by lowering intracellular levels of fructose-2,6-bisphosphate in a p53/TP53-dependent manner, resulting in the pentose phosphate pathway (PPP) activation and NADPH production. Contributes to the generation of reduced glutathione to cause a decrease in intracellular reactive oxygen species (ROS) content, correlating with its ability to protect cells from oxidative or metabolic stress-induced cell death. Plays a role in promoting protection against cell death during hypoxia by decreasing mitochondria ROS levels in a HK2-dependent manner through a mechanism that is independent of its fructose-bisphosphatase activity. In response to cardiac damage stress, mediates p53-induced inhibition of myocyte mitophagy through ROS levels reduction and the subsequent inactivation of BNIP3. Reduced mitophagy results in an enhanced apoptotic myocyte cell death, and exacerbates cardiac damage. Plays a role in adult intestinal regeneration; contributes to the growth, proliferation and survival of intestinal crypts following tissue ablation. Plays a neuroprotective role against ischemic brain damage by enhancing PPP flux and preserving mitochondria functions. Protects glioma cells from hypoxia- and ROS-induced cell death by inhibiting glycolysis and activating mitochondrial energy metabolism and oxygen consumption in a TKTL1-dependent and p53/TP53-independent manner. Plays a role in cancer cell survival by promoting DNA repair through activating PPP flux in a CDK5-ATM-dependent signaling pathway during hypoxia and/or genome stress-induced DNA damage responses. Involved in intestinal tumor progression. The chain is Fructose-2,6-bisphosphatase TIGAR from Bos taurus (Bovine).